The primary structure comprises 661 residues: UvrABC system protein B (661 aa).

Residues 25–414 (AGLSSKKRSQ…GTVVELIIRP (390 aa)) enclose the Helicase ATP-binding domain. 38-45 (GITGSGKT) serves as a coordination point for ATP. The Beta-hairpin motif lies at 91-114 (YYDYYQPEAYIARTDTFIEKDSSI). Positions 430–592 (QVEDLISEIQ…IIPKTINRAI (163 aa)) constitute a Helicase C-terminal domain. The UVR domain occupies 621-656 (KTHIDKLKKEMLKAASNLEFEQAVKLRDQLKTLEEA).

The protein belongs to the UvrB family. Forms a heterotetramer with UvrA during the search for lesions. Interacts with UvrC in an incision complex.

The protein resides in the cytoplasm. Functionally, the UvrABC repair system catalyzes the recognition and processing of DNA lesions. A damage recognition complex composed of 2 UvrA and 2 UvrB subunits scans DNA for abnormalities. Upon binding of the UvrA(2)B(2) complex to a putative damaged site, the DNA wraps around one UvrB monomer. DNA wrap is dependent on ATP binding by UvrB and probably causes local melting of the DNA helix, facilitating insertion of UvrB beta-hairpin between the DNA strands. Then UvrB probes one DNA strand for the presence of a lesion. If a lesion is found the UvrA subunits dissociate and the UvrB-DNA preincision complex is formed. This complex is subsequently bound by UvrC and the second UvrB is released. If no lesion is found, the DNA wraps around the other UvrB subunit that will check the other stand for damage. In Rickettsia conorii (strain ATCC VR-613 / Malish 7), this protein is UvrABC system protein B.